A 455-amino-acid chain; its full sequence is DNA N(6)-methyladenine demethylase ALKBH1C (455 aa).

Disordered stretches follow at residues 1 to 114 and 173 to 194; these read MNHS…AGDN and SSVEDQKSAPKADGAGNSSNES. Residues 345 to 455 form the Fe2OG dioxygenase domain; that stretch reads LPDICIVNFY…GRLNLTFRQY (111 aa). Position 352–354 (352–354) interacts with 2-oxoglutarate; it reads NFY. Fe cation contacts are provided by His-363, Asp-365, and His-423. 447–453 is a binding site for 2-oxoglutarate; it reads RLNLTFR.

It belongs to the alkB family. It depends on Fe(2+) as a cofactor. As to expression, expressed at low levels in roots and seedlings, but barely in cauline leaves, rosette leaves, stems, siliques and flowers.

It is found in the nucleus. The protein resides in the cytoplasm. The enzyme catalyses an N(6)-methyl-2'-deoxyadenosine in DNA + 2-oxoglutarate + O2 = a 2'-deoxyadenosine in DNA + formaldehyde + succinate + CO2. In terms of biological role, dioxygenase that catalyzes DNA N(6)-methyladenine (6 mA) demethylation with a low efficiency. The sequence is that of DNA N(6)-methyladenine demethylase ALKBH1C from Arabidopsis thaliana (Mouse-ear cress).